A 583-amino-acid polypeptide reads, in one-letter code: Protein FMP25, mitochondrial (583 aa).

A mitochondrion-targeting transit peptide spans 1-25 (MSFRLFTRTSQRLPRLNWVSPIRRY). Residues 83-105 (AVGQGILILVVVGGLGTAYLRWP) form a helical membrane-spanning segment. 4 RCC1 repeats span residues 332 to 389 (KGQF…AIDK), 390 to 452 (TGEI…VTIR), 459 to 510 (DHHY…TETE), and 512 to 569 (ENEV…KEQR).

The protein resides in the mitochondrion membrane. The sequence is that of Protein FMP25, mitochondrial (FMP25) from Saccharomyces cerevisiae (strain ATCC 204508 / S288c) (Baker's yeast).